A 215-amino-acid chain; its full sequence is Cytochrome b6 (215 aa).

The chain crosses the membrane as a helical span at residues 32–52; sequence IFYCLGGITLTCFLVQVATGF. C35 contributes to the heme c binding site. The heme b site is built by H86 and H100. A run of 3 helical transmembrane segments spans residues 90-110, 116-136, and 186-206; these read ASMM…TGGF, LTWV…VTGY, and LHTF…FPMI. Residues H187 and H202 each coordinate heme b.

This sequence belongs to the cytochrome b family. PetB subfamily. As to quaternary structure, the 4 large subunits of the cytochrome b6-f complex are cytochrome b6, subunit IV (17 kDa polypeptide, PetD), cytochrome f and the Rieske protein, while the 4 small subunits are PetG, PetL, PetM and PetN. The complex functions as a dimer. Heme b serves as cofactor. The cofactor is heme c.

It localises to the plastid. The protein resides in the chloroplast thylakoid membrane. Its function is as follows. Component of the cytochrome b6-f complex, which mediates electron transfer between photosystem II (PSII) and photosystem I (PSI), cyclic electron flow around PSI, and state transitions. The chain is Cytochrome b6 from Nicotiana tomentosiformis (Tobacco).